A 506-amino-acid polypeptide reads, in one-letter code: RNA-splicing ligase RtcB homolog (506 aa).

Residues D120, C123, H228, H260, and H354 each contribute to the Mn(2+) site. N227–E231 contacts GMP. GMP-binding positions include H354–N355, G403–M406, S410, H429–G432, and K505. The GMP-histidine intermediate role is filled by H429.

Belongs to the RtcB family. As to quaternary structure, catalytic component of the tRNA-splicing ligase complex. Mn(2+) serves as cofactor.

The enzyme catalyses a 3'-end 3'-phospho-ribonucleotide-RNA + a 5'-end dephospho-ribonucleoside-RNA + GTP = a ribonucleotidyl-ribonucleotide-RNA + GMP + diphosphate. It catalyses the reaction a 3'-end 2',3'-cyclophospho-ribonucleotide-RNA + a 5'-end dephospho-ribonucleoside-RNA + GTP + H2O = a ribonucleotidyl-ribonucleotide-RNA + GMP + diphosphate + H(+). Its function is as follows. Catalytic subunit of the tRNA-splicing ligase complex that acts by directly joining spliced tRNA halves to mature-sized tRNAs by incorporating the precursor-derived splice junction phosphate into the mature tRNA as a canonical 3',5'-phosphodiester. May act as an RNA ligase with broad substrate specificity, and may function toward other RNAs. The sequence is that of RNA-splicing ligase RtcB homolog from Drosophila melanogaster (Fruit fly).